The following is a 361-amino-acid chain: Phospho-N-acetylmuramoyl-pentapeptide-transferase (361 aa).

Helical transmembrane passes span 26 to 46 (SILA…VLIQ), 73 to 93 (TMGG…WGDL), 98 to 118 (VWLV…DDWI), 139 to 159 (IFGL…AAVT), 168 to 188 (IALP…IVGF), 200 to 220 (GLAI…AYAS), 237 to 257 (AGDL…FLWF), 264 to 284 (VFMG…IAVI), 289 to 309 (LVLV…IIQV), and 339 to 359 (VIVR…ATLK).

The protein belongs to the glycosyltransferase 4 family. MraY subfamily. The cofactor is Mg(2+).

It localises to the cell inner membrane. The enzyme catalyses UDP-N-acetyl-alpha-D-muramoyl-L-alanyl-gamma-D-glutamyl-meso-2,6-diaminopimeloyl-D-alanyl-D-alanine + di-trans,octa-cis-undecaprenyl phosphate = di-trans,octa-cis-undecaprenyl diphospho-N-acetyl-alpha-D-muramoyl-L-alanyl-D-glutamyl-meso-2,6-diaminopimeloyl-D-alanyl-D-alanine + UMP. It participates in cell wall biogenesis; peptidoglycan biosynthesis. Its function is as follows. Catalyzes the initial step of the lipid cycle reactions in the biosynthesis of the cell wall peptidoglycan: transfers peptidoglycan precursor phospho-MurNAc-pentapeptide from UDP-MurNAc-pentapeptide onto the lipid carrier undecaprenyl phosphate, yielding undecaprenyl-pyrophosphoryl-MurNAc-pentapeptide, known as lipid I. This is Phospho-N-acetylmuramoyl-pentapeptide-transferase from Xylella fastidiosa (strain M12).